Reading from the N-terminus, the 289-residue chain is 3-methyl-2-oxobutanoate hydroxymethyltransferase (289 aa).

The Mg(2+) site is built by Asp58 and Asp99. 3-methyl-2-oxobutanoate-binding positions include 58–59, Asp99, and Lys128; that span reads DS. Glu130 provides a ligand contact to Mg(2+). Catalysis depends on Glu197, which acts as the Proton acceptor.

Belongs to the PanB family. As to quaternary structure, homodecamer; pentamer of dimers. Requires Mg(2+) as cofactor.

The protein localises to the cytoplasm. It catalyses the reaction 3-methyl-2-oxobutanoate + (6R)-5,10-methylene-5,6,7,8-tetrahydrofolate + H2O = 2-dehydropantoate + (6S)-5,6,7,8-tetrahydrofolate. It functions in the pathway cofactor biosynthesis; (R)-pantothenate biosynthesis; (R)-pantoate from 3-methyl-2-oxobutanoate: step 1/2. Its function is as follows. Catalyzes the reversible reaction in which hydroxymethyl group from 5,10-methylenetetrahydrofolate is transferred onto alpha-ketoisovalerate to form ketopantoate. The polypeptide is 3-methyl-2-oxobutanoate hydroxymethyltransferase (Leptothrix cholodnii (strain ATCC 51168 / LMG 8142 / SP-6) (Leptothrix discophora (strain SP-6))).